A 209-amino-acid polypeptide reads, in one-letter code: NAD(P)H-quinone oxidoreductase subunit N, chloroplastic (209 aa).

The N-terminal 45 residues, Met1–Lys45, are a transit peptide targeting the chloroplast.

The protein belongs to the NDH complex subunit N family. Part of the chloroplast NDH complex, composed of a mixture of chloroplast and nucleus encoded subunits. Component of the NDH subcomplex A, at least composed of ndhH, ndhI, ndhJ, ndhK, ndhL, ndhM, ndhN and ndhO.

Its subcellular location is the plastid. It is found in the chloroplast thylakoid membrane. It catalyses the reaction a plastoquinone + NADH + (n+1) H(+)(in) = a plastoquinol + NAD(+) + n H(+)(out). The catalysed reaction is a plastoquinone + NADPH + (n+1) H(+)(in) = a plastoquinol + NADP(+) + n H(+)(out). NDH shuttles electrons from NAD(P)H:plastoquinone, via FMN and iron-sulfur (Fe-S) centers, to quinones in the photosynthetic chain and possibly in a chloroplast respiratory chain. The immediate electron acceptor for the enzyme in this species is believed to be plastoquinone. Couples the redox reaction to proton translocation, and thus conserves the redox energy in a proton gradient. The polypeptide is NAD(P)H-quinone oxidoreductase subunit N, chloroplastic (Arabidopsis thaliana (Mouse-ear cress)).